The following is a 403-amino-acid chain: Acetyl-CoA acetyltransferase IB (403 aa).

Residue cysteine 91 is the Acyl-thioester intermediate of the active site. Residues histidine 353 and cysteine 383 each act as proton acceptor in the active site. Residues 401 to 403 (AKL) carry the Microbody targeting signal motif.

This sequence belongs to the thiolase-like superfamily. Thiolase family. In terms of assembly, multimeric.

Its subcellular location is the peroxisome. It catalyses the reaction 2 acetyl-CoA = acetoacetyl-CoA + CoA. The protein operates within metabolic intermediate biosynthesis; (R)-mevalonate biosynthesis; (R)-mevalonate from acetyl-CoA: step 1/3. The chain is Acetyl-CoA acetyltransferase IB (PACTB) from Candida tropicalis (Yeast).